Here is a 366-residue protein sequence, read N- to C-terminus: MSASLKHTPLAETHLAAGARMVDFGGWEMPLAYGSQLEEHHAVRQDAGMFDVSHMLNADITGPDATAFLRYLVANDVARLNTPGKALYSCMLNPQGGVIDDLIIYYFAPDSWRVVVNAGTAEKDMAWMARVAAAGNFDVVITPRRDLAMIAVQGPNARAKVWAARPAWQPASEGLGPFTAAILPEDTLVARTGYTGEDGFEIVLPASAAVALWQDLVAQGVRPCGLGARDTLRLEAGMNLYGQDMDELVQPNQAGLSWTVSLKDAERRFIGRDALEQFATPCAFLGLKLSERGVMRAHMAVRTPQGMGLTTSGTMSPTLGVSIAFARLPLDVQPGSAVEVDIRGKWVPALVCKLPFVRNGKAVEHS.

The protein belongs to the GcvT family. In terms of assembly, the glycine cleavage system is composed of four proteins: P, T, L and H.

The catalysed reaction is N(6)-[(R)-S(8)-aminomethyldihydrolipoyl]-L-lysyl-[protein] + (6S)-5,6,7,8-tetrahydrofolate = N(6)-[(R)-dihydrolipoyl]-L-lysyl-[protein] + (6R)-5,10-methylene-5,6,7,8-tetrahydrofolate + NH4(+). Functionally, the glycine cleavage system catalyzes the degradation of glycine. The chain is Aminomethyltransferase from Bordetella avium (strain 197N).